We begin with the raw amino-acid sequence, 154 residues long: Snaclec agglucetin subunit alpha-1 (154 aa).

An N-terminal signal peptide occupies residues 1-23 (MGRFIFVSFGLLVVFLSLSGTGA). Disulfide bonds link Cys-27/Cys-38, Cys-55/Cys-150, and Cys-125/Cys-142. The C-type lectin domain occupies 34-151 (YDQSCYRVFK…CGSEYAFVCK (118 aa)). The N-linked (GlcNAc...) asparagine glycan is linked to Asn-116.

Belongs to the snaclec family. Heterotetramer of the subunits alpha-1, alpha-2, beta-1 and beta-2; disulfide-linked. As to expression, expressed by the venom gland.

It is found in the secreted. Its function is as follows. Agglucetin specifically causes platelet aggregation and surface exposure of integrin alpha-IIb/beta-3 with a GPIb-(GP1BA-) dependent manner in washed platelets. It binds to human platelets in a saturable manner, and its binding is specifically blocked by anti-GP Ib mAb. It regulates endothelial cell survival and promotes angiogenesis by activating integrin alpha-v/beta-3 signaling through FAK/phosphatidylinositol 3-kinase (PI3K)/Akt pathway. The sequence is that of Snaclec agglucetin subunit alpha-1 from Deinagkistrodon acutus (Hundred-pace snake).